We begin with the raw amino-acid sequence, 134 residues long: Holo-[acyl-carrier-protein] synthase (134 aa).

Mg(2+) contacts are provided by aspartate 8 and glutamate 58.

This sequence belongs to the P-Pant transferase superfamily. AcpS family. It depends on Mg(2+) as a cofactor.

The protein localises to the cytoplasm. It catalyses the reaction apo-[ACP] + CoA = holo-[ACP] + adenosine 3',5'-bisphosphate + H(+). Functionally, transfers the 4'-phosphopantetheine moiety from coenzyme A to a Ser of acyl-carrier-protein. The chain is Holo-[acyl-carrier-protein] synthase from Ruminiclostridium cellulolyticum (strain ATCC 35319 / DSM 5812 / JCM 6584 / H10) (Clostridium cellulolyticum).